The following is a 354-amino-acid chain: Histidinol-phosphate aminotransferase (354 aa).

At K208 the chain carries N6-(pyridoxal phosphate)lysine.

It belongs to the class-II pyridoxal-phosphate-dependent aminotransferase family. Histidinol-phosphate aminotransferase subfamily. In terms of assembly, homodimer. Requires pyridoxal 5'-phosphate as cofactor.

It catalyses the reaction L-histidinol phosphate + 2-oxoglutarate = 3-(imidazol-4-yl)-2-oxopropyl phosphate + L-glutamate. Its pathway is amino-acid biosynthesis; L-histidine biosynthesis; L-histidine from 5-phospho-alpha-D-ribose 1-diphosphate: step 7/9. In Aquifex aeolicus (strain VF5), this protein is Histidinol-phosphate aminotransferase.